We begin with the raw amino-acid sequence, 146 residues long: Meiotically up-regulated gene 151 protein (146 aa).

The disordered stretch occupies residues 1–40 (MSLVAYDSEEEEQTSLVNENNDIKGRSEEPHWKIPNSPKA). Residues 21–32 (NDIKGRSEEPHW) show a composition bias toward basic and acidic residues.

It localises to the nucleus. Functionally, has a role in meiosis. The protein is Meiotically up-regulated gene 151 protein (mug151) of Schizosaccharomyces pombe (strain 972 / ATCC 24843) (Fission yeast).